The chain runs to 301 residues: uncharacterized protein (301 aa).

Residues glutamate 146, glutamate 148, and aspartate 177 each coordinate a divalent metal cation.

This sequence belongs to the FAH family.

This is an uncharacterized protein from Staphylococcus haemolyticus (strain JCSC1435).